The chain runs to 150 residues: uncharacterized protein (150 aa).

Belongs to the Dps family.

This is an uncharacterized protein from Kitasatospora aureofaciens (Streptomyces aureofaciens).